Reading from the N-terminus, the 442-residue chain is 3-phosphoshikimate 1-carboxyvinyltransferase (442 aa).

Lys-27, Ser-28, and Arg-32 together coordinate 3-phosphoshikimate. Position 27 (Lys-27) interacts with phosphoenolpyruvate. The phosphoenolpyruvate site is built by Gly-100 and Arg-128. Positions 174, 175, 176, 204, 321, and 348 each coordinate 3-phosphoshikimate. Gln-176 lines the phosphoenolpyruvate pocket. Asp-321 acts as the Proton acceptor in catalysis. Phosphoenolpyruvate-binding residues include Arg-352, Arg-394, and Lys-424.

This sequence belongs to the EPSP synthase family. Monomer.

It is found in the cytoplasm. The catalysed reaction is 3-phosphoshikimate + phosphoenolpyruvate = 5-O-(1-carboxyvinyl)-3-phosphoshikimate + phosphate. Its pathway is metabolic intermediate biosynthesis; chorismate biosynthesis; chorismate from D-erythrose 4-phosphate and phosphoenolpyruvate: step 6/7. In terms of biological role, catalyzes the transfer of the enolpyruvyl moiety of phosphoenolpyruvate (PEP) to the 5-hydroxyl of shikimate-3-phosphate (S3P) to produce enolpyruvyl shikimate-3-phosphate and inorganic phosphate. The protein is 3-phosphoshikimate 1-carboxyvinyltransferase of Herminiimonas arsenicoxydans.